Reading from the N-terminus, the 390-residue chain is uncharacterized protein (390 aa).

Helical transmembrane passes span 27 to 47 (GGLI…MEWI) and 356 to 376 (FGGF…LASF).

The protein belongs to the ERGIC family.

It localises to the membrane. This is an uncharacterized protein from Schizosaccharomyces pombe (strain 972 / ATCC 24843) (Fission yeast).